Here is a 169-residue protein sequence, read N- to C-terminus: Photosystem I assembly protein Ycf3 (169 aa).

3 TPR repeats span residues 35-68 (AFTY…EIDP), 72-105 (SYIL…NPSL), and 120-153 (GEQA…APNN).

It belongs to the Ycf3 family.

Its subcellular location is the plastid. It is found in the chloroplast thylakoid membrane. Functionally, essential for the assembly of the photosystem I (PSI) complex. May act as a chaperone-like factor to guide the assembly of the PSI subunits. The polypeptide is Photosystem I assembly protein Ycf3 (Staurastrum punctulatum (Green alga)).